Consider the following 1272-residue polypeptide: RING finger protein PFE0100w (1272 aa).

The segment at 216–260 (INKINDVSNNDPKKDNNEKNTSSNNITHNNYNDISNNNNNNNNIN) is disordered. Low complexity predominate over residues 234-260 (KNTSSNNITHNNYNDISNNNNNNNNIN). The CHCR repeat unit spans residues 608–752 (YIQTINYLET…GYKFIKYYPQ (145 aa)). Residues 771–791 (IFIPLFLDNIDFLFMFIVKFL) traverse the membrane as a helical segment. Disordered stretches follow at residues 842-862 (NQNH…NNSQ) and 908-970 (ENQT…IINK). Low complexity-rich tracts occupy residues 850–861 (SDSHNLSDDNNS) and 909–956 (NQTN…IQTN). Residues 957-967 (KQKGNSTTNKI) show a composition bias toward polar residues. Residues 1146-1182 (MNDMNKNINDKCIEIEKDKKELEKIKKKQLKKKYNFY) are a coiled coil. Residues 1189 to 1224 (CSICKEILSVPMIHFLCKHSYHSYCLKDNNVCILCH) form an RING-type; atypical zinc finger.

The protein resides in the membrane. This chain is RING finger protein PFE0100w, found in Plasmodium falciparum (isolate 3D7).